The sequence spans 361 residues: D-alanine--D-alanine ligase (361 aa).

Residues 134–344 enclose the ATP-grasp domain; the sequence is KLLLKSFDIP…FKDLVDNLID (211 aa). 167–222 contacts ATP; that stretch reads KEVLGYPVIVKPAVLGSSIGINVAYSENQIESFIKEALKYDLTIVIEKFIEAREIE. Residues D297, E311, and N313 each coordinate Mg(2+).

This sequence belongs to the D-alanine--D-alanine ligase family. Mg(2+) is required as a cofactor. Mn(2+) serves as cofactor.

Its subcellular location is the cytoplasm. It carries out the reaction 2 D-alanine + ATP = D-alanyl-D-alanine + ADP + phosphate + H(+). It participates in cell wall biogenesis; peptidoglycan biosynthesis. Functionally, cell wall formation. The protein is D-alanine--D-alanine ligase of Borreliella burgdorferi (strain ZS7) (Borrelia burgdorferi).